The primary structure comprises 199 residues: Fe/S biogenesis protein NfuA (199 aa).

2 residues coordinate [4Fe-4S] cluster: Cys-151 and Cys-154.

It belongs to the NfuA family. In terms of assembly, homodimer. It depends on [4Fe-4S] cluster as a cofactor.

In terms of biological role, involved in iron-sulfur cluster biogenesis. Binds a 4Fe-4S cluster, can transfer this cluster to apoproteins, and thereby intervenes in the maturation of Fe/S proteins. Could also act as a scaffold/chaperone for damaged Fe/S proteins. The protein is Fe/S biogenesis protein NfuA of Xanthomonas campestris pv. campestris (strain 8004).